The following is a 141-amino-acid chain: Hemoglobin subunit alpha-1/2 (141 aa).

Positions 1-141 (VLSPTDKTNV…VSTVLTSKYR (141 aa)) constitute a Globin domain. The residue at position 3 (Ser3) is a Phosphoserine. An N6-succinyllysine modification is found at Lys7. The residue at position 8 (Thr8) is a Phosphothreonine. N6-succinyllysine is present on Lys11. Lys16 bears the N6-acetyllysine; alternate mark. Lys16 is subject to N6-succinyllysine; alternate. Tyr24 is subject to Phosphotyrosine. Residue Lys40 is modified to N6-succinyllysine. Ser49 bears the Phosphoserine mark. Residue His58 coordinates O2. His87 is a binding site for heme b. Ser102 carries the phosphoserine modification. Thr108 bears the Phosphothreonine mark. Position 124 is a phosphoserine (Ser124). A phosphothreonine mark is found at Thr134 and Thr137. Residue Ser138 is modified to Phosphoserine.

The protein belongs to the globin family. As to quaternary structure, heterotetramer of two alpha chains and two beta chains. Red blood cells.

Its function is as follows. Involved in oxygen transport from the lung to the various peripheral tissues. This is Hemoglobin subunit alpha-1/2 from Tapirus terrestris (Lowland tapir).